Consider the following 395-residue polypeptide: L-lactate dehydrogenase (395 aa).

Residues 1 to 380 form the FMN hydroxy acid dehydrogenase domain; it reads MIISAASDYR…SKDSLVQELS (380 aa). Residue Tyr24 participates in substrate binding. Residues Ser106 and Gln127 each coordinate FMN. Position 129 (Tyr129) interacts with substrate. Residue Thr155 coordinates FMN. Residue Arg164 coordinates substrate. Lys251 contributes to the FMN binding site. The active-site Proton acceptor is the His275. Arg278 provides a ligand contact to substrate. 306–330 serves as a coordination point for FMN; that stretch reads DSGIRNGLDVVRMIALGADSVLLGR.

The protein belongs to the FMN-dependent alpha-hydroxy acid dehydrogenase family. The cofactor is FMN.

The protein resides in the cell inner membrane. It carries out the reaction (S)-lactate + A = pyruvate + AH2. Catalyzes the conversion of L-lactate to pyruvate. Is coupled to the respiratory chain. This Enterobacter sp. (strain 638) protein is L-lactate dehydrogenase.